Consider the following 366-residue polypeptide: ABI gene family member 3 (366 aa).

The stretch at 33–61 (CEDNYVQATDKRKALEETMAFTTQALASV) forms a coiled coil. Residues 161–195 (SRTGTLSRKSIKAPATPASATLGRPPRIPEPVHLP) are disordered. 2 positions are modified to phosphoserine: serine 213 and serine 216. The segment at 215-302 (GSAEGVGGAP…PPPGFGPDEP (88 aa)) is disordered. Positions 232–248 (PPAPPLPSSLDPPPPPA) are enriched in pro residues. The 59-residue stretch at 308-366 (SYLEKVVTLYPYTSQKDNELSFSEGTVICVTRRYSDGWCEGVSSEGTGFFPGNYVEPSC) folds into the SH3 domain. At serine 342 the chain carries Phosphoserine.

Belongs to the ABI family. May interact with PAK1 and PAK2. Probably interacts with TARSH. In terms of tissue distribution, expressed in heart, lung, liver, pancreas, kidney, placenta and at low levels in brain and skeletal muscle.

It is found in the cytoplasm. May inhibit tumor metastasis. In vitro, reduces cell motility. The sequence is that of ABI gene family member 3 (ABI3) from Homo sapiens (Human).